A 138-amino-acid chain; its full sequence is uncharacterized protein (138 aa).

Positions M1–A37 are cleaved as a signal peptide.

It to H.influenzae HI_1631.

This is an uncharacterized protein from Sinorhizobium fredii (strain NBRC 101917 / NGR234).